We begin with the raw amino-acid sequence, 487 residues long: Glutamyl-tRNA(Gln) amidotransferase subunit A (487 aa).

Residues lysine 75 and serine 150 each act as charge relay system in the active site. Catalysis depends on serine 174, which acts as the Acyl-ester intermediate.

The protein belongs to the amidase family. GatA subfamily. Heterotrimer of A, B and C subunits.

It carries out the reaction L-glutamyl-tRNA(Gln) + L-glutamine + ATP + H2O = L-glutaminyl-tRNA(Gln) + L-glutamate + ADP + phosphate + H(+). Allows the formation of correctly charged Gln-tRNA(Gln) through the transamidation of misacylated Glu-tRNA(Gln) in organisms which lack glutaminyl-tRNA synthetase. The reaction takes place in the presence of glutamine and ATP through an activated gamma-phospho-Glu-tRNA(Gln). This is Glutamyl-tRNA(Gln) amidotransferase subunit A from Syntrophomonas wolfei subsp. wolfei (strain DSM 2245B / Goettingen).